The sequence spans 632 residues: Galactan 5-O-arabinofuranosyltransferase (632 aa).

A run of 13 helical transmembrane segments spans residues 10–30 (QIVL…IAIA), 45–65 (ALTT…GGVW), 76–96 (LGGL…PLGA), 162–182 (WAIT…WQMI), 184–204 (FEYA…YSSP), 206–226 (PYAA…WSGL), 242–259 (GWAT…AATW), 263–282 (LLAY…ATAL), 298–318 (LAGI…PFLA), 344–364 (FPML…LWLI), 375–395 (ALMI…LTTL), 409–429 (LTVL…QSLA), and 434–454 (AVLS…SQDI). Residues 455–632 (PNVLRPDLTI…LAIRKPMGNA (178 aa)) are Extracellular-facing.

It belongs to the glycosyltransferase 85 family.

It is found in the cell membrane. The enzyme catalyses Adds an alpha-D-arabinofuranosyl group from trans,octacis-decaprenylphospho-beta-D-arabinofuranose at the 5-O-position of the eighth, tenth and twelfth galactofuranose unit of the galactofuranan chain of [beta-D-galactofuranosyl-(1-&gt;5)-beta-D-galactofuranosyl-(1-&gt;6)]14-beta-D-galactofuranosyl-(1-&gt;5)-beta-D-galactofuranosyl-(1-&gt;4)-alpha-L-rhamnopyranosyl-(1-&gt;3)-N-acetyl-alpha-D-glucosaminyl-diphospho-trans,octacis-decaprenol.. The protein operates within cell wall biogenesis; cell wall polysaccharide biosynthesis. In terms of biological role, involved in the biosynthesis of the arabinogalactan (AG) region of the mycolylarabinogalactan-peptidoglycan (mAGP) complex, an essential component of the mycobacterial cell wall. Catalyzes the addition of the first key arabinofuranosyl (Araf) residue from the sugar donor decaprenyl-phospho-arabinose (DPA) on the C-5 of a 6-linked galactofuranosyl (Galf) of the galactan domain, thus 'priming' the galactan for further elaboration by other arabinofuranosyltransferases. This chain is Galactan 5-O-arabinofuranosyltransferase, found in Mycobacterium leprae (strain TN).